Consider the following 1186-residue polypeptide: Syntaxin-binding protein 5-like (1186 aa).

Residue Met1 is modified to N-acetylmethionine. The tract at residues 15-40 (ASSPGSGSSSGSNSGGGAGSGSVHPA) is disordered. Low complexity predominate over residues 16-26 (SSPGSGSSSGS). WD repeat units follow at residues 74–107 (TALA…CYCQ), 114–153 (VLQL…SLKF), 158–194 (ITYC…GYVI), 213–247 (HLSD…ELRV), 253–285 (IHSI…PSRP), 307–349 (PILK…KAIT), 357–391 (IVEF…VVDL), 413–490 (TCTA…YKLK), 518–629 (QMIY…ELVI), and 643–705 (TSLA…IADN). Phosphothreonine is present on Thr568. Ser574, Ser589, and Ser593 each carry phosphoserine. Thr596 carries the phosphothreonine modification. The residue at position 599 (Ser599) is a Phosphoserine. Arg709 bears the Omega-N-methylarginine mark. The span at 748–769 (TSDHVNGHCTSPTSQSCSSGKR) shows a compositional bias: polar residues. Positions 748-771 (TSDHVNGHCTSPTSQSCSSGKRLS) are disordered. 11 positions are modified to phosphoserine: Ser763, Ser765, Ser766, Ser771, Ser772, Ser793, Ser800, Ser812, Ser820, Ser822, and Ser823. WD repeat units follow at residues 832-889 (ITAL…SGTF), 898-969 (TFSC…QTCL), 974-1018 (ITET…LDVN), and 1032-1055 (CFTN…TYSQ). Thr1093 carries the post-translational modification Phosphothreonine. A v-SNARE coiled-coil homology domain is found at 1121–1181 (SIEGMKGAAG…HELMLKYKDK (61 aa)).

Belongs to the WD repeat L(2)GL family. As to quaternary structure, interacts with STX1A and STX4. In terms of processing, phosphorylated, leading to STXBP5L increased turnover and subsequent de-repression of insulin secretion. Phosphorylated on serine residues in response to glucose or phorbol esters. Post-translationally, ubiquitinated by the E3 ligase SYVN1, leading to STXBP5L proteasomal degradation. As to expression, detected in kidney, hippocampus and lung carcinoma.

It localises to the cytoplasm. The protein resides in the cell membrane. It is found in the membrane. Plays a role in vesicle trafficking and exocytosis inhibition. In pancreatic beta-cells, inhibits insulin secretion probably by interacting with and regulating STX1A and STX4, key t-SNARE proteins involved in the fusion of insulin granules to the plasma membrane. Also plays a role in neurotransmitter release by inhibiting basal acetylcholine release from axon terminals and by preventing synaptic fatigue upon repetitive stimulation. Promotes as well axonal outgrowth. In Homo sapiens (Human), this protein is Syntaxin-binding protein 5-like (STXBP5L).